Here is a 445-residue protein sequence, read N- to C-terminus: UDP-N-acetylmuramoylalanine--D-glutamate ligase (445 aa).

117–123 is an ATP binding site; it reads GSNGKTT.

Belongs to the MurCDEF family.

It localises to the cytoplasm. The catalysed reaction is UDP-N-acetyl-alpha-D-muramoyl-L-alanine + D-glutamate + ATP = UDP-N-acetyl-alpha-D-muramoyl-L-alanyl-D-glutamate + ADP + phosphate + H(+). It functions in the pathway cell wall biogenesis; peptidoglycan biosynthesis. Its function is as follows. Cell wall formation. Catalyzes the addition of glutamate to the nucleotide precursor UDP-N-acetylmuramoyl-L-alanine (UMA). This chain is UDP-N-acetylmuramoylalanine--D-glutamate ligase, found in Neisseria meningitidis serogroup A / serotype 4A (strain DSM 15465 / Z2491).